The primary structure comprises 231 residues: Ribose-5-phosphate isomerase A (231 aa).

Substrate is bound by residues 28–31 (TGST), 83–86 (DGAD), and 96–99 (KGGG). Glu-105 serves as the catalytic Proton acceptor. Residue Lys-123 participates in substrate binding.

Belongs to the ribose 5-phosphate isomerase family. In terms of assembly, homodimer.

It catalyses the reaction aldehydo-D-ribose 5-phosphate = D-ribulose 5-phosphate. It participates in carbohydrate degradation; pentose phosphate pathway; D-ribose 5-phosphate from D-ribulose 5-phosphate (non-oxidative stage): step 1/1. Catalyzes the reversible conversion of ribose-5-phosphate to ribulose 5-phosphate. The chain is Ribose-5-phosphate isomerase A from Sinorhizobium medicae (strain WSM419) (Ensifer medicae).